An 83-amino-acid chain; its full sequence is Cytochrome c oxidase subunit 7A2, mitochondrial (83 aa).

A mitochondrion-targeting transit peptide spans 1–23 (MLRNLLALRQIAKRTISTSSRRQ). Topologically, residues 24–48 (FENKVPEKQKLFQEDNGIPVHLKGG) are mitochondrial matrix. Lys-33 is modified (N6-acetyllysine). The chain crosses the membrane as a helical span at residues 49 to 77 (IADALLYRATLILTVGGTAYAMYELAVAS). The Mitochondrial intermembrane portion of the chain corresponds to 78 to 83 (FPKKQD).

It belongs to the cytochrome c oxidase VIIa family. As to quaternary structure, component of the cytochrome c oxidase (complex IV, CIV), a multisubunit enzyme composed of 14 subunits. The complex is composed of a catalytic core of 3 subunits MT-CO1, MT-CO2 and MT-CO3, encoded in the mitochondrial DNA, and 11 supernumerary subunits COX4I1 (or COX4I2), COX5A, COX5B, COX6A2 (or COX6A1), COX6B1 (or COX6B2), COX6C, COX7A1 (or COX7A2), COX7B, COX7C, COX8B and NDUFA4, which are encoded in the nuclear genome. The complex exists as a monomer or a dimer and forms supercomplexes (SCs) in the inner mitochondrial membrane with NADH-ubiquinone oxidoreductase (complex I, CI) and ubiquinol-cytochrome c oxidoreductase (cytochrome b-c1 complex, complex III, CIII), resulting in different assemblies (supercomplex SCI(1)III(2)IV(1) and megacomplex MCI(2)III(2)IV(2)). Interacts with PET100.

Its subcellular location is the mitochondrion inner membrane. The protein operates within energy metabolism; oxidative phosphorylation. In terms of biological role, component of the cytochrome c oxidase, the last enzyme in the mitochondrial electron transport chain which drives oxidative phosphorylation. The respiratory chain contains 3 multisubunit complexes succinate dehydrogenase (complex II, CII), ubiquinol-cytochrome c oxidoreductase (cytochrome b-c1 complex, complex III, CIII) and cytochrome c oxidase (complex IV, CIV), that cooperate to transfer electrons derived from NADH and succinate to molecular oxygen, creating an electrochemical gradient over the inner membrane that drives transmembrane transport and the ATP synthase. Cytochrome c oxidase is the component of the respiratory chain that catalyzes the reduction of oxygen to water. Electrons originating from reduced cytochrome c in the intermembrane space (IMS) are transferred via the dinuclear copper A center (CU(A)) of subunit 2 and heme A of subunit 1 to the active site in subunit 1, a binuclear center (BNC) formed by heme A3 and copper B (CU(B)). The BNC reduces molecular oxygen to 2 water molecules using 4 electrons from cytochrome c in the IMS and 4 protons from the mitochondrial matrix. The polypeptide is Cytochrome c oxidase subunit 7A2, mitochondrial (COX7A2) (Bos taurus (Bovine)).